The following is a 212-amino-acid chain: MQPQGKMKKPTAEHMINENIPFQKVFVIGANGEKVGVLSTREAIEMAKEQRLDLVLISVQPKPIARILDYGKFKYERKKKQKAAKEKQTVIQNRQIRLTPLIGEHDLNVKARKAKEFLLDGDRIKVSLKFRGRESARPELGHKTLEKFYKAVEDLADIAKEAELVNDRFLDMYLQPNKIKVNKYRKEHNLVDKNSDSQDKSVSEEDTNEGEQ.

A compositionally biased stretch (basic and acidic residues) spans Leu-190–Ser-203. Residues Leu-190–Gln-212 form a disordered region.

This sequence belongs to the IF-3 family. As to quaternary structure, monomer.

Its subcellular location is the cytoplasm. Functionally, IF-3 binds to the 30S ribosomal subunit and shifts the equilibrium between 70S ribosomes and their 50S and 30S subunits in favor of the free subunits, thus enhancing the availability of 30S subunits on which protein synthesis initiation begins. This chain is Translation initiation factor IF-3, found in Mycoplasmopsis fermentans (Mycoplasma fermentans).